Here is a 1004-residue protein sequence, read N- to C-terminus: DNA-directed RNA polymerase subunit beta' (1004 aa).

Positions 388, 390, and 392 each coordinate Mg(2+). The Zn(2+) site is built by C757, C831, C838, and C841.

The protein belongs to the RNA polymerase beta' chain family. As to quaternary structure, the RNAP catalytic core consists of 2 alpha, 1 beta, 1 beta' and 1 omega subunit. When a sigma factor is associated with the core the holoenzyme is formed, which can initiate transcription. Mg(2+) is required as a cofactor. Requires Zn(2+) as cofactor.

The catalysed reaction is RNA(n) + a ribonucleoside 5'-triphosphate = RNA(n+1) + diphosphate. Its function is as follows. DNA-dependent RNA polymerase catalyzes the transcription of DNA into RNA using the four ribonucleoside triphosphates as substrates. In Oenococcus oeni (Leuconostoc oenos), this protein is DNA-directed RNA polymerase subunit beta'.